Consider the following 236-residue polypeptide: uncharacterized protein (236 aa).

The HTH gntR-type domain maps to 5-73; it reads QSTVENAKEK…DRKGWFVTQP (69 aa). Residues 33–52 constitute a DNA-binding region (H-T-H motif); the sequence is ERELGELLGIKRMTLRQALL.

This is an uncharacterized protein from Escherichia coli O157:H7.